The chain runs to 289 residues: MSRLANSAGDWADDEEFDEAASLPPQQVISNKDGTKTVITYRFNDDGKKVKTTRRIRTTVVKEHVNPRVAERKAWAKFGLEKDHAPGPSLDTTSVGENIIFRPSVNWKAQAKEVEKAGGEKGGLKDQLKDKKVKCRICSGEHFTARCPFKDTMAPVDEPTGPTGGDNEDEERPAGALGSGATAYVPPALRKGGSGGEKMAGRYERDELATLRVTNVSELAEEGELRDMFGRFGHVTRVFLAKDKETNMAKGFAFISFADRADAARACEKMDGFGYRHLILRVEFAKKTT.

Disordered regions lie at residues 1-31 (MSRL…VISN) and 151-199 (DTMA…GEKM). The 79-residue stretch at 209-287 (ATLRVTNVSE…LILRVEFAKK (79 aa)) folds into the RRM domain.

It belongs to the eIF-3 subunit G family. As to quaternary structure, component of the eukaryotic translation initiation factor 3 (eIF-3) complex.

It is found in the cytoplasm. In terms of biological role, RNA-binding component of the eukaryotic translation initiation factor 3 (eIF-3) complex, which is involved in protein synthesis of a specialized repertoire of mRNAs and, together with other initiation factors, stimulates binding of mRNA and methionyl-tRNAi to the 40S ribosome. The eIF-3 complex specifically targets and initiates translation of a subset of mRNAs involved in cell proliferation. This subunit can bind 18S rRNA. This Coccidioides immitis (strain RS) (Valley fever fungus) protein is Eukaryotic translation initiation factor 3 subunit G.